The chain runs to 293 residues: GTPase Era (293 aa).

In terms of domain architecture, Era-type G spans 5-174 (RTISVCIIGR…ITGKAQIAPW (170 aa)). The segment at 13–20 (GRPNSGKS) is G1. Residue 13-20 (GRPNSGKS) coordinates GTP. Positions 39–43 (QTTRS) are G2. The segment at 60–63 (DTPG) is G3. GTP is bound by residues 60–64 (DTPGI) and 122–125 (NKID). The G4 stretch occupies residues 122–125 (NKID). Positions 150–152 (ISA) are G5. Residues 202–279 (LQQELPYKLT…HLFLFVKVHE (78 aa)) form the KH type-2 domain.

Belongs to the TRAFAC class TrmE-Era-EngA-EngB-Septin-like GTPase superfamily. Era GTPase family. In terms of assembly, monomer.

Its subcellular location is the cytoplasm. The protein resides in the cell inner membrane. An essential GTPase that binds both GDP and GTP, with rapid nucleotide exchange. Plays a role in 16S rRNA processing and 30S ribosomal subunit biogenesis and possibly also in cell cycle regulation and energy metabolism. The protein is GTPase Era of Rickettsia akari (strain Hartford).